Consider the following 74-residue polypeptide: U-actitoxin-Bgr3a (74 aa).

The N-terminal stretch at 1-21 (MSAQRFLFLLVVTSLIAASLA) is a signal peptide. Positions 22–29 (APKDVQLT) are excised as a propeptide. 3 disulfide bridges follow: Cys-35/Cys-68, Cys-37/Cys-61, and Cys-51/Cys-69.

The protein belongs to the sea anemone type 3 (BDS) potassium channel toxin family.

It is found in the secreted. The protein resides in the nematocyst. Its function is as follows. Potently and selectively inhibits voltage-gated potassium channels Kv11/KCNH/ERG. Acts as a gating-modifier toxin that shifts the voltage-dependence of ERG activation in the positive direction and suppresses its current amplitudes elicited by strong depolarizing pulses that maximally activate the channels. In Bunodosoma granuliferum (Red warty sea anemone), this protein is U-actitoxin-Bgr3a.